The sequence spans 132 residues: UPF0329 protein ECU07_0050/ECU09_2020 (132 aa).

This sequence belongs to the UPF0329 family.

The polypeptide is UPF0329 protein ECU07_0050/ECU09_2020 (Encephalitozoon cuniculi (strain GB-M1) (Microsporidian parasite)).